The sequence spans 932 residues: Protocadherin gamma-A6 (932 aa).

The N-terminal stretch at 1 to 29 is a signal peptide; that stretch reads MAPPQRHPQRSEQVLLLTLLGTLWGAAAA. 6 consecutive Cadherin domains span residues 30 to 133, 134 to 242, 243 to 347, 348 to 452, 453 to 562, and 570 to 682; these read QIRY…TPRF, LKEE…TPVF, TQPV…VPEV, VVTS…PPTF, PHSS…APEI, and DGST…EPSA. Topologically, residues 30–692 are extracellular; it reads QIRYSIPEEL…KPNDSDLTLY (663 aa). N81 carries N-linked (GlcNAc...) asparagine glycosylation. N-linked (GlcNAc...) asparagine glycosylation is found at N419 and N545. An N-linked (GlcNAc...) asparagine glycan is attached at N685. Residues 693–713 traverse the membrane as a helical segment; it reads LVVAVAAVSCVFLAFVIVLLA. Residues 714–932 are Cytoplasmic-facing; sequence LRLQRWHKSR…KKKSGKKEKK (219 aa). 2 disordered regions span residues 803-841 and 902-932; these read DPRQ…WPNN and ATLT…KEKK. Over residues 806–841 the composition is skewed to polar residues; sequence QLQQAPPNTDWRFSQAQRPGTSGSQNGDDTGTWPNN. The span at 922-932 shows a compositional bias: basic residues; that stretch reads NKKKSGKKEKK.

It localises to the cell membrane. Functionally, potential calcium-dependent cell-adhesion protein. May be involved in the establishment and maintenance of specific neuronal connections in the brain. The protein is Protocadherin gamma-A6 (PCDHGA6) of Pan troglodytes (Chimpanzee).